We begin with the raw amino-acid sequence, 298 residues long: 1,2-dihydroxynaphthalene dioxygenase (298 aa).

VOC domains lie at 6–121 (ELGY…IFYG) and 146–267 (GIGH…FGWG). Fe cation is bound at residue His149. Residues His149, 196–197 (QH), His212, and Tyr253 each bind substrate. His212 serves as a coordination point for Fe cation. Glu263 contacts Fe cation.

The protein belongs to the extradiol ring-cleavage dioxygenase family. As to quaternary structure, homooctamer. The cofactor is Fe(2+).

The catalysed reaction is naphthalene-1,2-diol + O2 = 2-hydroxychromene-2-carboxylate + H(+). Its pathway is aromatic compound metabolism; naphthalene degradation. Its function is as follows. Involved in the naphthalene and naphthalenesulfonate catabolic pathway. Catalyzes the meta-cleavage of 1,2-dihydroxynaphthalene (1,2-DHN) to yield 2-hydroxychromene-2-carboxylic acid. Can also cleave 1,2,5-trihydroxynaphthalene (1,2,5-THN), 1,2,6-trihydroxynaphthalene (1,2,6-THN), 1,2,7-trihydroxynaphthalene (1,2,7-THN), 2,3-dihydroxybiphenyl, 3,4-dihydroxybiphenyl, catechol, 3-methylcatechol and 4-methylcatechol. This is 1,2-dihydroxynaphthalene dioxygenase (nsaC) from Sphingobium xenophagum.